Reading from the N-terminus, the 546-residue chain is Chaperonin GroEL 2 (546 aa).

Residues 30-33 (TLGP), Lys-51, 87-91 (DGTTT), Gly-415, and Asp-496 contribute to the ATP site.

This sequence belongs to the chaperonin (HSP60) family. Forms a cylinder of 14 subunits composed of two heptameric rings stacked back-to-back. Interacts with the co-chaperonin GroES.

The protein localises to the cytoplasm. It catalyses the reaction ATP + H2O + a folded polypeptide = ADP + phosphate + an unfolded polypeptide.. Functionally, together with its co-chaperonin GroES, plays an essential role in assisting protein folding. The GroEL-GroES system forms a nano-cage that allows encapsulation of the non-native substrate proteins and provides a physical environment optimized to promote and accelerate protein folding. This chain is Chaperonin GroEL 2, found in Bradyrhizobium sp. (strain ORS 278).